A 66-amino-acid polypeptide reads, in one-letter code: Large ribosomal subunit protein bL35 (66 aa).

Over residues 1–26 (MPKMKTHRGAAKRVKRTASGKLKRSR) the composition is skewed to basic residues. The disordered stretch occupies residues 1–49 (MPKMKTHRGAAKRVKRTASGKLKRSRAFTSHLFANKSTKQKRKLRKASL).

The protein belongs to the bacterial ribosomal protein bL35 family.

The chain is Large ribosomal subunit protein bL35 from Staphylococcus carnosus (strain TM300).